We begin with the raw amino-acid sequence, 255 residues long: Zinc import ATP-binding protein ZnuC 1 (255 aa).

Residues 7-220 form the ABC transporter domain; that stretch reads IRLQDVTVKI…PAFINLFGTQ (214 aa). 39–46 provides a ligand contact to ATP; it reads GPNGAGKS. Residues 229–255 form a disordered region; that stretch reads HHHHDHHHHTDGTVAAGSECSHGDQHA.

The protein belongs to the ABC transporter superfamily. Zinc importer (TC 3.A.1.15.5) family. In terms of assembly, the complex is composed of two ATP-binding proteins (ZnuC), two transmembrane proteins (ZnuB) and a solute-binding protein (ZnuA).

Its subcellular location is the cell inner membrane. It carries out the reaction Zn(2+)(out) + ATP(in) + H2O(in) = Zn(2+)(in) + ADP(in) + phosphate(in) + H(+)(in). Functionally, part of the ABC transporter complex ZnuABC involved in zinc import. Responsible for energy coupling to the transport system. The polypeptide is Zinc import ATP-binding protein ZnuC 1 (Hahella chejuensis (strain KCTC 2396)).